Here is a 352-residue protein sequence, read N- to C-terminus: Protein Wnt-3a (352 aa).

An N-terminal signal peptide occupies residues Met1–Gly18. Cystine bridges form between Cys77/Cys88, Cys128/Cys136, Cys138/Cys155, Cys203/Cys217, Cys205/Cys212, Cys281/Cys312, Cys297/Cys307, Cys311/Cys351, Cys327/Cys342, Cys329/Cys339, and Cys334/Cys335. Asn87 is a glycosylation site (N-linked (GlcNAc...) asparagine). A lipid anchor (O-palmitoleoyl serine; by PORCN) is attached at Ser209. Residue Asn298 is glycosylated (N-linked (GlcNAc...) asparagine).

Belongs to the Wnt family. As to quaternary structure, forms a soluble 1:1 complex with AFM; this prevents oligomerization and is required for prolonged biological activity. The complex with AFM may represent the physiological form in body fluids. Homooligomer; disulfide-linked, leading to inactivation. Interacts with PORCN. Interacts with APCDD1 and WLS. Component of the Wnt-Fzd-LRP5-LRP6 signaling complex that contains a WNT protein, a FZD protein and LRP5 or LRP6. Interacts directly in the complex with LRP6. Interacts with glypican GPC3. Interacts with PKD1 (via extracellular domain). Interacts with FZD5. In terms of processing, palmitoleoylation by PORCN is required for efficient binding to frizzled receptors. Palmitoleoylation is required for proper trafficking to cell surface, vacuolar acidification is critical to release palmitoleoylated WNT3A from WLS in secretory vesicles. Depalmitoleoylated by NOTUM, leading to inhibit Wnt signaling pathway, possibly by promoting disulfide bond formation and oligomerization. Post-translationally, proteolytic processing by TIKI1 and TIKI2 promotes oxidation and formation of large disulfide-bond oligomers, leading to inactivation of WNT3A. Disulfide bonds have critical and distinct roles in secretion and activity. Loss of each conserved cysteine in WNT3A results in high molecular weight oxidized Wnt oligomers, which are formed through inter-Wnt disulfide bonding. In terms of tissue distribution, moderately expressed in placenta and at low levels in adult lung, spleen, and prostate.

It localises to the secreted. The protein resides in the extracellular space. The protein localises to the extracellular matrix. Its function is as follows. Ligand for members of the frizzled family of seven transmembrane receptors. Functions in the canonical Wnt signaling pathway that results in activation of transcription factors of the TCF/LEF family. Required for normal embryonic mesoderm development and formation of caudal somites. Required for normal morphogenesis of the developing neural tube. Mediates self-renewal of the stem cells at the bottom on intestinal crypts (in vitro). The polypeptide is Protein Wnt-3a (WNT3A) (Homo sapiens (Human)).